Here is a 616-residue protein sequence, read N- to C-terminus: Dihydroxy-acid dehydratase (616 aa).

Asp81 is a Mg(2+) binding site. Residue Cys122 coordinates [2Fe-2S] cluster. 2 residues coordinate Mg(2+): Asp123 and Lys124. At Lys124 the chain carries N6-carboxylysine. Residue Cys195 coordinates [2Fe-2S] cluster. A Mg(2+)-binding site is contributed by Glu491. Ser517 acts as the Proton acceptor in catalysis.

This sequence belongs to the IlvD/Edd family. In terms of assembly, homodimer. [2Fe-2S] cluster serves as cofactor. Mg(2+) is required as a cofactor.

The enzyme catalyses (2R)-2,3-dihydroxy-3-methylbutanoate = 3-methyl-2-oxobutanoate + H2O. It carries out the reaction (2R,3R)-2,3-dihydroxy-3-methylpentanoate = (S)-3-methyl-2-oxopentanoate + H2O. It functions in the pathway amino-acid biosynthesis; L-isoleucine biosynthesis; L-isoleucine from 2-oxobutanoate: step 3/4. It participates in amino-acid biosynthesis; L-valine biosynthesis; L-valine from pyruvate: step 3/4. Its function is as follows. Functions in the biosynthesis of branched-chain amino acids. Catalyzes the dehydration of (2R,3R)-2,3-dihydroxy-3-methylpentanoate (2,3-dihydroxy-3-methylvalerate) into 2-oxo-3-methylpentanoate (2-oxo-3-methylvalerate) and of (2R)-2,3-dihydroxy-3-methylbutanoate (2,3-dihydroxyisovalerate) into 2-oxo-3-methylbutanoate (2-oxoisovalerate), the penultimate precursor to L-isoleucine and L-valine, respectively. The sequence is that of Dihydroxy-acid dehydratase from Shigella sonnei (strain Ss046).